An 831-amino-acid chain; its full sequence is DNA ligase (831 aa).

NAD(+)-binding positions include 34-38, 83-84, and E114; these read DADYD and SL. Residue K116 is the N6-AMP-lysine intermediate of the active site. R137, E174, K291, and K315 together coordinate NAD(+). 4 residues coordinate Zn(2+): C409, C412, C427, and C433. Residues 749-831 enclose the BRCT domain; that stretch reads AHTAPLNGQS…LDFLEQYSAQ (83 aa).

Belongs to the NAD-dependent DNA ligase family. LigA subfamily. Mg(2+) is required as a cofactor. Mn(2+) serves as cofactor.

The enzyme catalyses NAD(+) + (deoxyribonucleotide)n-3'-hydroxyl + 5'-phospho-(deoxyribonucleotide)m = (deoxyribonucleotide)n+m + AMP + beta-nicotinamide D-nucleotide.. Functionally, DNA ligase that catalyzes the formation of phosphodiester linkages between 5'-phosphoryl and 3'-hydroxyl groups in double-stranded DNA using NAD as a coenzyme and as the energy source for the reaction. It is essential for DNA replication and repair of damaged DNA. This chain is DNA ligase, found in Xylella fastidiosa (strain M12).